The sequence spans 820 residues: MGRLRRRQEIIDHEEEESNDDVSSRRGKLSLAETFRWLDSSEHRRIETDGHNDYKYIIHPKNRWYKAWEMFILVWAIYSSLFTPMEFGFFRGLPERLFVLDIVGQIAFLVDIVLQFFVAYRDTQTYRTVYKPTRIAFRYLKSHFLMDFIGCFPWDLIYKASGKHELVRYLLWIRLFRVRKVVEFFQRLEKDTRINYLFTRILKLLFVEVYCTHTAACIFYYLATTLPPENEGYTWIGSLKLGDYSYENFREIDLWKRYTTALYFAIVTMATVGYGDIHAVNLREMIFVMIYVSFDMVLGAYLIGNITALIVKGSNTERFRDKMNDLISFMNRKKLGRDLRSQITGHVRLQYDSHYTDTVMLQDIPASIRAKIAQLLYLPYIKKVPLFKGCSTEFINQIVIRLHEEYFLPGEVITEQGNVVDHLYFVCEGLLEALVTKTDGSEESVTLLGPHTSFGDISIICNISQPFTVRVCELCHLLRLDKQSFSNILEIYFHDGRTILNNIMEEKESNDRIKKLESDIVIHIGKQEAELALKVNSAAFQGDFYQLKSLIRSGADPNKTDYDGRSPLHLAACRGYEDITLFLIQEGVDVNLKDKFGHTPLFEAVKAGQEGVIGLLVKEGASFNLEDSGNFLCTTVAKGDSDFLKRLLSSGMNPNSEDYDHRTPLHVAASEGLFLMAKMLVEAGASVISKDRWGNSPLDEARLCGNKKLIKLLEDVKNAQSSIYPSSLRELQEERIERRKCTVFPFHPQEAKEERSRKHGVVVWIPSNLEKLIVTAAKELGLSDGASFVLLSEDQGRITDIDMISDGHKLYMISDTTDQT.

Residues methionine 1–glutamate 69 lie on the Cytoplasmic side of the membrane. Residues methionine 70 to phenylalanine 90 form a helical membrane-spanning segment. Residues arginine 91–leucine 97 lie on the Extracellular side of the membrane. Residues phenylalanine 98–valine 118 traverse the membrane as a helical segment. Over alanine 119 to lysine 141 the chain is Cytoplasmic. Residues serine 142–glycine 162 form a helical membrane-spanning segment. Topologically, residues lysine 163–arginine 168 are extracellular. A helical; Voltage-sensor transmembrane segment spans residues tyrosine 169–glutamate 189. Over lysine 190–lysine 203 the chain is Cytoplasmic. Residues leucine 204–threonine 224 form a helical membrane-spanning segment. Residues threonine 225–threonine 259 are Extracellular-facing. Positions threonine 260–alanine 279 form an intramembrane region, pore-forming. Over valine 280–methionine 285 the chain is Extracellular. Residues isoleucine 286 to isoleucine 306 traverse the membrane as a helical segment. Residues threonine 307–threonine 820 lie on the Cytoplasmic side of the membrane. Leucine 386–glutamate 508 serves as a coordination point for a nucleoside 3',5'-cyclic phosphate. ANK repeat units follow at residues glutamate 528–lysine 559, aspartate 563–leucine 592, phenylalanine 596–leucine 625, aspartate 627–serine 656, aspartate 660–serine 689, and tryptophan 693–serine 722. A KHA domain is found at lysine 740–threonine 820.

Belongs to the potassium channel family. Plant (TC 1.A.1.4) subfamily. The potassium channel is probably composed of a homo- or heterotetrameric complex of pore-forming subunits. Expressed in guard cell-containing tissues, in root epidermal cells and in root hairs. Detected in vascular cells of the root and shoot.

It is found in the membrane. Its function is as follows. Major selective outward-rectifying potassium channel of the guard cell membrane. Involved in regulation of stomatal movements according to the water status. Assuming opened or closed conformations in response to the voltage difference across the membrane, the channel is activated by depolarization. Conductance of the channel is modulated in a potassium-dependent fashion. May interact with the cytoskeleton or with regulatory proteins. This Arabidopsis thaliana (Mouse-ear cress) protein is Potassium channel GORK (GORK).